We begin with the raw amino-acid sequence, 207 residues long: Myosin light chain 6B (207 aa).

Residues methionine 1–proline 50 are disordered. The span at glutamate 36 to proline 50 shows a compositional bias: low complexity. EF-hand domains are found at residues aspartate 63–asparagine 98, glycine 140–lysine 175, and lysine 175–leucine 207.

In terms of assembly, myosin is a hexamer of 2 heavy chains and 4 light chains.

In terms of biological role, regulatory light chain of myosin. Does not bind calcium. The protein is Myosin light chain 6B of Mus musculus (Mouse).